We begin with the raw amino-acid sequence, 138 residues long: UPF0251 protein Dole_1957 (138 aa).

This sequence belongs to the UPF0251 family.

The sequence is that of UPF0251 protein Dole_1957 from Desulfosudis oleivorans (strain DSM 6200 / JCM 39069 / Hxd3) (Desulfococcus oleovorans).